The primary structure comprises 497 residues: Indoleacetaldoxime dehydratase (497 aa).

A helical transmembrane segment spans residues 2–20 (EMILSISLCLTTLITLLLL). Position 439 (Cys439) interacts with heme.

Belongs to the cytochrome P450 family.

It is found in the membrane. The enzyme catalyses (E)-(indol-3-yl)acetaldehyde oxime = (indol-3-yl)acetonitrile + H2O. Its function is as follows. Involved in the biosynthesis of the indole-derived phytoalexin camalexin. Catalyzes the conversion of indole-3-acetaldoxime to indole-3-acetonitrile. Required for resistance to A.brassicicola and B.cinerea. The chain is Indoleacetaldoxime dehydratase (CYP71A13) from Arabidopsis thaliana (Mouse-ear cress).